The chain runs to 892 residues: DNA mismatch repair protein MutS (892 aa).

607–614 (GPNMSGKS) lines the ATP pocket. The interval 833 to 854 (EESQLSFFGGEQSPKKQDKPVL) is disordered. Residues 845-854 (SPKKQDKPVL) show a composition bias toward basic and acidic residues.

It belongs to the DNA mismatch repair MutS family.

Its function is as follows. This protein is involved in the repair of mismatches in DNA. It is possible that it carries out the mismatch recognition step. This protein has a weak ATPase activity. This Bacillus cereus (strain Q1) protein is DNA mismatch repair protein MutS.